We begin with the raw amino-acid sequence, 398 residues long: 1-deoxy-D-xylulose 5-phosphate reductoisomerase (398 aa).

NADPH is bound by residues Thr-10, Gly-11, Ser-12, Ile-13, Gly-36, Arg-37, Asn-38, and Asn-124. Residue Lys-125 participates in 1-deoxy-D-xylulose 5-phosphate binding. Residue Glu-126 participates in NADPH binding. A Mn(2+)-binding site is contributed by Asp-150. 4 residues coordinate 1-deoxy-D-xylulose 5-phosphate: Ser-151, Glu-152, Ser-186, and His-209. Glu-152 contacts Mn(2+). Position 215 (Gly-215) interacts with NADPH. Ser-222, Asn-227, Lys-228, and Glu-231 together coordinate 1-deoxy-D-xylulose 5-phosphate. Glu-231 contacts Mn(2+).

It belongs to the DXR family. Homodimer. The cofactor is Mg(2+). It depends on Mn(2+) as a cofactor.

The enzyme catalyses 2-C-methyl-D-erythritol 4-phosphate + NADP(+) = 1-deoxy-D-xylulose 5-phosphate + NADPH + H(+). It participates in isoprenoid biosynthesis; isopentenyl diphosphate biosynthesis via DXP pathway; isopentenyl diphosphate from 1-deoxy-D-xylulose 5-phosphate: step 1/6. Functionally, catalyzes the NADPH-dependent rearrangement and reduction of 1-deoxy-D-xylulose-5-phosphate (DXP) to 2-C-methyl-D-erythritol 4-phosphate (MEP). The sequence is that of 1-deoxy-D-xylulose 5-phosphate reductoisomerase from Yersinia pseudotuberculosis serotype IB (strain PB1/+).